The sequence spans 294 residues: MAAGKLLLYAGLSLSLCALGMLAVAICSDHWYETDARRYRERCRSFSSRRKDPGFIYIPNNSLPLRASRSRLDRWEEKLLLARNRRQLFAMSAADECSKRYNSTNMGLWSKCHRLGFDQEIEDLIRNGSIARCSYIKYHYSSATIPKDLSYNITKTIRQDEWHSLHLRRMTAGFMGMAVAIILFGWIIGMLGCCWDRGLMQYVAGLLFLMGGTFCIISLCTCVAGINFELSRYPRYIYGLPDDISHGYGWSMFCAWGGLGLSLIAGFFCTLAPSVQPIPRSTCPKSRQENGTVC.

The N-terminal stretch at Met-1–Ala-23 is a signal peptide. 3 helical membrane-spanning segments follow: residues Ala-172–Gly-192, Leu-206–Ile-226, and Met-252–Ala-272.

It belongs to the TMEM178 family.

It localises to the membrane. The chain is Transmembrane protein 178B (tmem178b) from Danio rerio (Zebrafish).